The following is a 380-amino-acid chain: GDP-mannose:cellobiosyl-diphosphopolyprenol alpha-mannosyltransferase (380 aa).

This sequence belongs to the glycosyltransferase group 1 family. Glycosyltransferase 4 subfamily.

It carries out the reaction beta-D-Glc-(1-&gt;4)-alpha-D-Glc-di-trans,octa-cis-undecaprenyl diphosphate + GDP-alpha-D-mannose = alpha-D-Man-(1-&gt;3)-beta-D-Glc-(1-&gt;4)-alpha-D-Glc-1-di-trans,octa-cis-undecaprenyl diphosphate + GDP + H(+). In terms of biological role, involved in the biosynthesis of the exopolysaccharide xanthan, a polymer that is comprised of repeating pentasaccharide units with the structure of a beta-(1,4)-linked D-glucose backbone with trisaccharide side chains composed of mannose-beta-(1,4)-glucuronic acid-beta-(1,2)-mannose attached to alternate glucose residues in the backbone by alpha-(1,3) linkages. Xanthan is involved in pathogenicity but has also been used in a variety of applications as a specialty polymer for commercial applications, including food additives, where they act as viscosifying, stabilizing, emulsifying, or gelling agents. The chain is GDP-mannose:cellobiosyl-diphosphopolyprenol alpha-mannosyltransferase (gumH) from Xanthomonas campestris.